Here is a 248-residue protein sequence, read N- to C-terminus: UPF0280 protein Maeo_0343 (248 aa).

Belongs to the UPF0280 family.

The protein is UPF0280 protein Maeo_0343 of Methanococcus aeolicus (strain ATCC BAA-1280 / DSM 17508 / OCM 812 / Nankai-3).